Consider the following 642-residue polypeptide: MPVITLPDGSQRHYDHPVSPMDVALDIGPGLAKATIAGRVNGELVDACDLIENDATLAIITAKDEEGLEIIRHSCAHLLGHAIKQLWPHTKMAIGPVVDNGFYYDVDLDRTLTQEDVEALEKRMHELAEKNYDVIKKKVSWHDARETFVKRGETYKVAILDENIAHDDKPGLYHHEEYVDMCRGPHVPNMRFCHHFKLMKTAGAYWRGDSNNKMLQRIYGTAWADKKALNAYLQRLEEAAKRDHRKIGKQLDLYHMQEEAPGMVFWHNDGWTIFRELEVFVRSKLKEYQYQEVKGPFMMDRVLWEKTGHWDNYKDAMFTTSSENREYCIKPMNCPGHVQIFNQGLKSYRDLPLRMAEFGSCHRNEPSGALHGLMRVRGFTQDDAHIFCTEEQIRDEVNACIRMVYDMYSTFGFEKIVVKLSTRPDKRIGSDEMWDRAEADLAVALEENNIPFEYQLGEGAFYGPKIEFTLYDCLDRAWQCGTVQLDFSLPSRLSASYVGEDNERKVPVMIHRAILGSMERFIGILTEEFAGFFPTWLAPVQVVVMNITDSQSEYVNELTQKLQNAGIRVKADLRNEKIGFKIREHTLRRVPYMLVCGDKEVEAGKVAVRTRRGKDLGSLDVNDVIEKLQQEIRSRSLQQLEE.

In terms of domain architecture, TGS spans 1–61 (MPVITLPDGS…ENDATLAIIT (61 aa)). Residues 243–534 (DHRKIGKQLD…LTEEFAGFFP (292 aa)) form a catalytic region. C334, H385, and H511 together coordinate Zn(2+).

Belongs to the class-II aminoacyl-tRNA synthetase family. As to quaternary structure, homodimer. It depends on Zn(2+) as a cofactor.

It is found in the cytoplasm. The enzyme catalyses tRNA(Thr) + L-threonine + ATP = L-threonyl-tRNA(Thr) + AMP + diphosphate + H(+). Its function is as follows. Catalyzes the attachment of threonine to tRNA(Thr) in a two-step reaction: L-threonine is first activated by ATP to form Thr-AMP and then transferred to the acceptor end of tRNA(Thr). Also edits incorrectly charged L-seryl-tRNA(Thr). This is Threonine--tRNA ligase from Salmonella choleraesuis (strain SC-B67).